The chain runs to 699 residues: Elongation factor G 1 (699 aa).

One can recognise a tr-type G domain in the interval 8 to 290; it reads EHYRNIGICA…AVIEFLPSPS (283 aa). Residues 17-24, 88-92, and 142-145 each bind GTP; these read AHVDAGKT, DTPGH, and NKMD.

The protein belongs to the TRAFAC class translation factor GTPase superfamily. Classic translation factor GTPase family. EF-G/EF-2 subfamily.

The protein resides in the cytoplasm. Catalyzes the GTP-dependent ribosomal translocation step during translation elongation. During this step, the ribosome changes from the pre-translocational (PRE) to the post-translocational (POST) state as the newly formed A-site-bound peptidyl-tRNA and P-site-bound deacylated tRNA move to the P and E sites, respectively. Catalyzes the coordinated movement of the two tRNA molecules, the mRNA and conformational changes in the ribosome. This chain is Elongation factor G 1, found in Vibrio parahaemolyticus serotype O3:K6 (strain RIMD 2210633).